The chain runs to 168 residues: Plasma membrane-associated cation-binding protein 2 (168 aa).

A lipid anchor (N-myristoyl glycine) is attached at Gly-2. Tandem repeats lie at residues 26 to 30, 69 to 73, 94 to 99, 103 to 107, 110 to 115, 118 to 122, and 124 to 129. Residues 26–129 form a 7 X 5 AA approximate repeats of V-E-E-K-K region; it reads VEEEKPREVE…EKKPVEEEKK (104 aa). A coiled-coil region spans residues 56–77; the sequence is EEIIATGEKEIEIVEEKKEEAK. Over residues 88–131 the composition is skewed to basic and acidic residues; that stretch reads EEKKPAVEEEKKTAPVEEKKPAVEEEKKPAVEEKKPVEEEKKEV. Residues 88–168 are disordered; that stretch reads EEKKPAVEEE…ETPAAAPQKA (81 aa). The span at 152 to 168 shows a compositional bias: low complexity; sequence ETPAKAPETPAAAPQKA.

This sequence belongs to the DREPP family. Binds microtubules. Interacts with calcium ion Ca(2+), calmodulin and some phosphatidylinositol phosphates (PtdInsPs) such as phosphatidylinositol 3,5-bisphosphate [PtdIns(3,5)P(2)], PtdIns(4,5)P(2) and PtdIns(3,4,5)P(3). Requires Cu(2+) as cofactor. Mostly expressed in the expanding cells, specifically in roots (except in root tips) and flowers (at protein level). Also detected in cotyledons, hypocotyls and trichome stalks.

It is found in the cell membrane. The protein resides in the cytoplasm. Its subcellular location is the cytoskeleton. In terms of biological role, may be involved in intracellular signaling through interaction with PtdInsPs and calmodulin (CaM); may keep PtdInsPs attached to the plasma membrane until Ca(2+)-CaM reaches a competitive concentration subsequent to an increase triggered by a stimulus, thus leading to PtdInsPs release and subsequent activation of InsPs-dependent signaling cascade. Binds to microtubules and inhibits tubulin polymerization. Regulates directional cell growth and cortical microtubule organization by destabilizing microtubules (e.g. in cotyledon pavement cells). In Arabidopsis thaliana (Mouse-ear cress), this protein is Plasma membrane-associated cation-binding protein 2.